The following is a 146-amino-acid chain: Single-stranded DNA-binding protein, mitochondrial (146 aa).

A mitochondrion-targeting transit peptide spans 1–16 (MLRNASAQILKQFVRH). The 112-residue stretch at 29–140 (INKVQILGRV…IIADNIVFLS (112 aa)) folds into the SSB domain.

The protein localises to the mitochondrion. It is found in the mitochondrion matrix. It localises to the mitochondrion nucleoid. In terms of biological role, binds preferentially and cooperatively to pyrimidine rich single-stranded DNA (ss-DNA). May be required to maintain the copy number of mitochondrial DNA (mtDNA) and play a crucial role during mtDNA replication. Required for retinal ganglion cell differentiation and retinal integrity. This Danio rerio (Zebrafish) protein is Single-stranded DNA-binding protein, mitochondrial.